We begin with the raw amino-acid sequence, 625 residues long: MTAILDTIESPCDLKGVTQRELAQLAAELREKIITVCARNGGHLAPSLGVVELTLALHRVFDSPADKIIWDVGHQAYAHKLLTGRRDRFATLRTLGGISGFPKRCESSHDAFDTGHTSTSISAALGFAVARDLRGERNKVVAVIGDGSMTGGLAYEGLNNAGHLNKDLVVVLNDNEMSIAENVGALSNFLNRTVTSEFVHTMKKDLEGFLGGLDRIGHGVLKVAKRAEESLKGLFTPGMLFEAFGFEYIGPIDGHDTARLMETFEKVKRFDDAVLIHVLTKKGRGYPPAEEKPALFHGVGPFELETGKVIKGKGGAASYTGVFGEAIRKIAAEDERVIALTAAMPDGTGLTPFAADYPTRFFDVGIAEQHGVTFAAGLAAEGYRPVFAVYSSFLQRAYDQVFHDVCLQNLPVTFAIDRAGVVGSDGPTHHGLFDLAYLRHLPNMVVMAPKDENELQHLLLTAIEHDGPAAVRYPRGNGYGVSLDQTCSVLPIGKGEILREGLDGALLAIGSTVYPAREAAEALAAEGIDLAVVNARFVKPLDRDLILSLARTTGRLIIVEENVIQGGFGTAVLELLEEEGINGVKVLRLGYPDRYVEQGEQHELRAQYGLDAPGITARVRTFMKG.

Residues His74 and 115–117 each bind thiamine diphosphate; that span reads GHT. Asp146 contacts Mg(2+). Residues 147-148, Asn175, Tyr286, and Glu368 contribute to the thiamine diphosphate site; that span reads GS. Residue Asn175 participates in Mg(2+) binding.

It belongs to the transketolase family. DXPS subfamily. In terms of assembly, homodimer. Requires Mg(2+) as cofactor. The cofactor is thiamine diphosphate.

The catalysed reaction is D-glyceraldehyde 3-phosphate + pyruvate + H(+) = 1-deoxy-D-xylulose 5-phosphate + CO2. The protein operates within metabolic intermediate biosynthesis; 1-deoxy-D-xylulose 5-phosphate biosynthesis; 1-deoxy-D-xylulose 5-phosphate from D-glyceraldehyde 3-phosphate and pyruvate: step 1/1. Functionally, catalyzes the acyloin condensation reaction between C atoms 2 and 3 of pyruvate and glyceraldehyde 3-phosphate to yield 1-deoxy-D-xylulose-5-phosphate (DXP). This Geobacter metallireducens (strain ATCC 53774 / DSM 7210 / GS-15) protein is 1-deoxy-D-xylulose-5-phosphate synthase 1.